Consider the following 85-residue polypeptide: Cloacin immunity protein (85 aa).

N6-methyllysine is present on Lys-12.

Belongs to the cloacin immunity protein family.

This protein complexes with cloacin protein in equimolar amounts and inhibits it by binding with high affinity to the C-terminal catalytic domain of cloacin. This chain is Cloacin immunity protein (cim), found in Escherichia coli.